Consider the following 310-residue polypeptide: Probable deoxyhypusine synthase (310 aa).

Catalysis depends on K284, which acts as the Nucleophile.

Belongs to the deoxyhypusine synthase family. NAD(+) serves as cofactor.

It carries out the reaction [eIF5A protein]-L-lysine + spermidine = [eIF5A protein]-deoxyhypusine + propane-1,3-diamine. Its pathway is protein modification; eIF5A hypusination. Catalyzes the NAD-dependent oxidative cleavage of spermidine and the subsequent transfer of the butylamine moiety of spermidine to the epsilon-amino group of a specific lysine residue of the eIF-5A precursor protein to form the intermediate deoxyhypusine residue. The sequence is that of Probable deoxyhypusine synthase (dys) from Thermoplasma volcanium (strain ATCC 51530 / DSM 4299 / JCM 9571 / NBRC 15438 / GSS1).